A 117-amino-acid polypeptide reads, in one-letter code: MHVSNFTAGLLLLVIAFGGTSIILKHKVERLETSVTEITKTANENALALNNLRIQYNYIDAMNNKNREAIAAIERENEKLRKDAKKADVVAHKPGLVEKQINNSFNKFAEDIQDLSK.

Topologically, residues 1-2 are cytoplasmic; it reads MH. A helical; Signal-anchor for type II membrane protein transmembrane segment spans residues 3-23; the sequence is VSNFTAGLLLLVIAFGGTSII. The stretch at 24–93 forms a coiled coil; the sequence is LKHKVERLET…AKKADVVAHK (70 aa). Residues 24–117 lie on the Periplasmic side of the membrane; that stretch reads LKHKVERLET…FAEDIQDLSK (94 aa).

As to quaternary structure, interacts (via C-terminus) with the spanin outer lipoprotein subunit (via C-terminus). Part of the spanin complex which spans the entire periplasmic space. The spanin complex is composed of spanin inner membrane subunit and spanin outer membrane subunit.

It localises to the host cell inner membrane. In terms of biological role, component of the spanin complex that disrupts the host outer membrane and participates in cell lysis during virus exit. The spanin complex conducts the final step in host lysis by disrupting the outer membrane after holin and endolysin action have permeabilized the inner membrane and degraded the host peptidoglycans. Host outer membrane disruption is possibly due to local fusion between the inner and outer membrane performed by the spanin complex. This is Spanin, inner membrane subunit (y13K) from Enterobacteria phage T4 (Bacteriophage T4).